The sequence spans 282 residues: Protoheme IX farnesyltransferase (282 aa).

Helical transmembrane passes span 9 to 29, 39 to 59, 79 to 99, 102 to 122, 139 to 159, 165 to 185, 210 to 230, 231 to 251, and 261 to 281; these read LAKP…FLLA, LPLF…GCVF, LVTG…LLIL, LVLY…GFIV, VLGG…VVNI, LALF…IAML, IMLF…VLGS, ADLF…YKSI, and VFAK…CLTM.

It belongs to the UbiA prenyltransferase family. Protoheme IX farnesyltransferase subfamily.

It localises to the cell inner membrane. It carries out the reaction heme b + (2E,6E)-farnesyl diphosphate + H2O = Fe(II)-heme o + diphosphate. Its pathway is porphyrin-containing compound metabolism; heme O biosynthesis; heme O from protoheme: step 1/1. Converts heme B (protoheme IX) to heme O by substitution of the vinyl group on carbon 2 of heme B porphyrin ring with a hydroxyethyl farnesyl side group. In Francisella tularensis subsp. holarctica (strain LVS), this protein is Protoheme IX farnesyltransferase.